Reading from the N-terminus, the 433-residue chain is 3-phosphoshikimate 1-carboxyvinyltransferase (433 aa).

Positions 22, 23, and 27 each coordinate 3-phosphoshikimate. Phosphoenolpyruvate is bound at residue K22. The phosphoenolpyruvate site is built by G95 and R123. Positions 167, 169, 315, and 342 each coordinate 3-phosphoshikimate. Q169 is a phosphoenolpyruvate binding site. The Proton acceptor role is filled by D315. Positions 346 and 387 each coordinate phosphoenolpyruvate.

It belongs to the EPSP synthase family. As to quaternary structure, monomer.

It is found in the cytoplasm. It carries out the reaction 3-phosphoshikimate + phosphoenolpyruvate = 5-O-(1-carboxyvinyl)-3-phosphoshikimate + phosphate. It participates in metabolic intermediate biosynthesis; chorismate biosynthesis; chorismate from D-erythrose 4-phosphate and phosphoenolpyruvate: step 6/7. Catalyzes the transfer of the enolpyruvyl moiety of phosphoenolpyruvate (PEP) to the 5-hydroxyl of shikimate-3-phosphate (S3P) to produce enolpyruvyl shikimate-3-phosphate and inorganic phosphate. This is 3-phosphoshikimate 1-carboxyvinyltransferase from Legionella pneumophila (strain Corby).